We begin with the raw amino-acid sequence, 392 residues long: Glutamine synthetase (392 aa).

Positions 26–106 (VQVTYVWIDG…VMCEVLKYNR (81 aa)) constitute a GS beta-grasp domain. The GS catalytic domain maps to 113-392 (LRHTCKKIME…MASPRDAAVF (280 aa)). Position 134 (Glu-134) interacts with ATP. Mn(2+) contacts are provided by Glu-134, Glu-136, Glu-196, and Glu-203. ATP is bound at residue 203–208 (EFQVGP). Residue 246–247 (NW) participates in L-glutamate binding. His-253 lines the Mn(2+) pocket. ATP-binding positions include 255-257 (NYS), Arg-319, and Arg-324. Residue Arg-319 coordinates L-glutamate. Position 336–338 (336–338 (YFE)) interacts with ADP. Glu-338 contributes to the Mn(2+) binding site. Residue Arg-340 coordinates L-glutamate.

It belongs to the glutamine synthetase family. Requires Mg(2+) as cofactor. Mn(2+) serves as cofactor.

Its subcellular location is the cytoplasm. It is found in the cytosol. The protein resides in the microsome. The protein localises to the mitochondrion. It catalyses the reaction L-glutamate + NH4(+) + ATP = L-glutamine + ADP + phosphate + H(+). Glutamine synthetase that catalyzes the ATP-dependent conversion of glutamate and ammonia to glutamine. In Xenopus laevis (African clawed frog), this protein is Glutamine synthetase.